The following is a 312-amino-acid chain: Pimeloyl-[acyl-carrier protein] methyl ester esterase (312 aa).

The AB hydrolase-1 domain occupies 17-241 (VYLIHGWGAN…KAAHAPFLSH (225 aa)). Substrate-binding positions include W23, 83 to 84 (SL), and 145 to 149 (FLQLQ). The Nucleophile role is filled by S83. Residues D207 and H235 contribute to the active site. A substrate-binding site is contributed by H235.

It belongs to the AB hydrolase superfamily. Carboxylesterase BioH family. As to quaternary structure, monomer.

It localises to the cytoplasm. It catalyses the reaction 6-carboxyhexanoyl-[ACP] methyl ester + H2O = 6-carboxyhexanoyl-[ACP] + methanol + H(+). Its pathway is cofactor biosynthesis; biotin biosynthesis. Its function is as follows. The physiological role of BioH is to remove the methyl group introduced by BioC when the pimeloyl moiety is complete. It allows to synthesize pimeloyl-ACP via the fatty acid synthetic pathway through the hydrolysis of the ester bonds of pimeloyl-ACP esters. In Neisseria meningitidis serogroup A / serotype 4A (strain DSM 15465 / Z2491), this protein is Pimeloyl-[acyl-carrier protein] methyl ester esterase.